The sequence spans 875 residues: MKASEIRSTFLKFFESKGHQIVGSSPVVPGDDPTLLFTNAGMNQFKDVFLGFDKRPYSRATTSQKCIRAGGKHNDLDNVGYTARHHTFFEMLGNFSFGDYFKHDAISYAWELLTEHFKLPKDKLWVTVYSEDDEAYEIWNKVVGVPAERIVRIGDNKGARYMSDNFWMMGDTGPCGPCTEIFFDHGEGIPGGPPGSPDEDGDRYIEIWNNVFMQFNRTEDGVMHKLPKPSVDTGMGLERITAVLQHVHSNYEIDLFVALLAAAKAAVESAGGKDVDPESPSLKVIADHIRACSFTIVDGVIPGNEGRGYVLRRIARRAIRHGYKLGARTPFFHKIVAELVAQMGEAYPELRAAQARVTEVLKQEEERFFQTIQHGMEILEHALAGGTKQVDGETAFKLHDTYGFPVDLTADVCRERGVTVDQAGFDAAMEHQRSQARAAGKFKMAAGLAYSGAPTAFHGYEHLVCETSKVVAIYVDGTPVDAAQAGDDAAIVLDHTPFYAESGGQAGDSGELRNGSTRVVVADTFKIQADVFGHHGRIVEGSVKVGDSFVAKVDAELRAKTVRNHSATHLMHKALREVLGAHVQQKGSLVNAERTRFDFAHNAPVSDAQIRQVEAIVNAEILANAAASAQVMALDDAQKSGAMMLFGEKYGETVRVLSIGSSKELCGGTHVKATGDIGLFKVVAESGVAAGIRRIEAITGDNALAYLQSLESTVNGVASALKSAVPEVPARISGLQDQVRALEKELAALKGKLASSQGDSLLAQTVDINGLKVLAVVLEGADAATLRTTMDQLKNKLKTAAIVLAAVDGGKVQLAAGVTADSTAKVKAGELVNFVAQQVGGKGGGKPDMAMAGGTDPSKLAAALASVPGWVGERV.

Histidine 565, histidine 569, cysteine 666, and histidine 670 together coordinate Zn(2+).

Belongs to the class-II aminoacyl-tRNA synthetase family. Zn(2+) serves as cofactor.

It localises to the cytoplasm. The catalysed reaction is tRNA(Ala) + L-alanine + ATP = L-alanyl-tRNA(Ala) + AMP + diphosphate. In terms of biological role, catalyzes the attachment of alanine to tRNA(Ala) in a two-step reaction: alanine is first activated by ATP to form Ala-AMP and then transferred to the acceptor end of tRNA(Ala). Also edits incorrectly charged Ser-tRNA(Ala) and Gly-tRNA(Ala) via its editing domain. The sequence is that of Alanine--tRNA ligase from Leptothrix cholodnii (strain ATCC 51168 / LMG 8142 / SP-6) (Leptothrix discophora (strain SP-6)).